We begin with the raw amino-acid sequence, 201 residues long: Potassium-transporting ATPase KdpC subunit (201 aa).

A helical membrane pass occupies residues 17–37; sequence LLTGLAYPLAMTGLAGILFPV.

Belongs to the KdpC family. In terms of assembly, the system is composed of three essential subunits: KdpA, KdpB and KdpC.

The protein localises to the cell inner membrane. Part of the high-affinity ATP-driven potassium transport (or Kdp) system, which catalyzes the hydrolysis of ATP coupled with the electrogenic transport of potassium into the cytoplasm. This subunit acts as a catalytic chaperone that increases the ATP-binding affinity of the ATP-hydrolyzing subunit KdpB by the formation of a transient KdpB/KdpC/ATP ternary complex. The sequence is that of Potassium-transporting ATPase KdpC subunit from Methylobacterium nodulans (strain LMG 21967 / CNCM I-2342 / ORS 2060).